A 397-amino-acid chain; its full sequence is Acetate kinase (397 aa).

Residue asparagine 8 participates in Mg(2+) binding. Lysine 15 is an ATP binding site. Arginine 89 is a binding site for substrate. Aspartate 146 (proton donor/acceptor) is an active-site residue. ATP contacts are provided by residues 206 to 210 (HLGNG), 281 to 283 (DLR), and 329 to 333 (GIGEN). Glutamate 382 serves as a coordination point for Mg(2+).

The protein belongs to the acetokinase family. Homodimer. Requires Mg(2+) as cofactor. Mn(2+) serves as cofactor.

It is found in the cytoplasm. It catalyses the reaction acetate + ATP = acetyl phosphate + ADP. It functions in the pathway metabolic intermediate biosynthesis; acetyl-CoA biosynthesis; acetyl-CoA from acetate: step 1/2. Its function is as follows. Catalyzes the formation of acetyl phosphate from acetate and ATP. Can also catalyze the reverse reaction. The chain is Acetate kinase from Geobacillus sp. (strain WCH70).